The following is a 227-amino-acid chain: PKHD-type hydroxylase Bphyt_7102 (227 aa).

The region spanning 80 to 179 is the Fe2OG dioxygenase domain; the sequence is QVYPPLFNRY…RIASFFWVQS (100 aa). Fe cation contacts are provided by His98, Asp100, and His160. Residue Arg170 participates in 2-oxoglutarate binding.

It depends on Fe(2+) as a cofactor. L-ascorbate is required as a cofactor.

In Paraburkholderia phytofirmans (strain DSM 17436 / LMG 22146 / PsJN) (Burkholderia phytofirmans), this protein is PKHD-type hydroxylase Bphyt_7102.